A 576-amino-acid polypeptide reads, in one-letter code: Putative SPbeta prophage-derived single-strand DNA-specific exonuclease YorK (576 aa).

At tyrosine 473 the chain carries Phosphotyrosine.

It belongs to the RecJ family.

In terms of biological role, putative single-stranded-DNA-specific exonuclease. This chain is Putative SPbeta prophage-derived single-strand DNA-specific exonuclease YorK (yorK), found in Bacillus subtilis (strain 168).